The primary structure comprises 708 residues: Leukotoxin translocation ATP-binding protein LktB (708 aa).

The Peptidase C39 domain occupies 1–126 (MEVNHQSNDL…SCYQGKIILV (126 aa)). The 283-residue stretch at 155–437 (FLETLLVSIF…LAQLWQDFTQ (283 aa)) folds into the ABC transmembrane type-1 domain. The next 5 helical transmembrane spans lie at 159-179 (LLVSIFLQIFALITPLFFQVV), 192-212 (LNIITVALAIVIIFEIVLSGL), 270-290 (ALTSVLDLLFSFIFFAVMWYY), 296-316 (LVILGSLPCYILWSIFISPIL), and 389-409 (VMVINLWLGAHLVISGDLSIG). The ABC transporter domain occupies 469–704 (IAFKNIRFRY…NNGLYSYLHQ (236 aa)). 503–510 (GRSGSGKS) provides a ligand contact to ATP.

Belongs to the ABC transporter superfamily. Protein-1 exporter (TC 3.A.1.109) family. In terms of assembly, homodimer.

It localises to the cell inner membrane. It carries out the reaction ATP + H2O + proteinSide 1 = ADP + phosphate + proteinSide 2.. Part of the ABC transporter complex LktBD involved in leukotoxin export. Transmembrane domains (TMD) form a pore in the inner membrane and the ATP-binding domain (NBD) is responsible for energy generation. This is Leukotoxin translocation ATP-binding protein LktB (lktB) from Pasteurella haemolytica-like sp. (strain 5943B).